The chain runs to 443 residues: Aklavinone 7-beta-L-rhodosaminyltransferase (443 aa).

An N-terminal signal peptide occupies residues 1–23 (MRVLLTSFALDAHFNGSVPLAWA).

This sequence belongs to the glycosyltransferase 28 family.

It catalyses the reaction dTDP-beta-L-rhodosamine + aklavinone = aclacinomycin T + dTDP + 2 H(+). Its activity is regulated as follows. The activity of AknS is substantially increased by the addition of the accessory protein AknT. Functionally, involved in the biosynthesis of the anthracycline antitumor agent aclacinomycin A. Catalyzes the transfer of the proximal deoxyhexose, L-rhodosamine, from dTDP-beta-L-rhodosamine to the C7-OH of aklavinone aglycone to yield aclacinomycin T (rhodosaminyl-aklavinone). It can also use dTDP-2-deoxy-beta-L-fucose, TDP-2-deoxyfucose, dTDP-4-amino-2-deoxyrhamnose, TDP-L-rhodosamine as sugar donor and epsilon-rhodomycinone as sugar acceptor. The chain is Aklavinone 7-beta-L-rhodosaminyltransferase from Streptomyces galilaeus.